We begin with the raw amino-acid sequence, 175 residues long: NADH dehydrogenase [ubiquinone] iron-sulfur protein 4, mitochondrial (175 aa).

The transit peptide at 1–42 directs the protein to the mitochondrion; sequence MAAVSMSVALRQALWGRRVATVAAVSVSKVSTRSLSTSTWRL. The interval 149-175 is disordered; it reads ERKVPKPKSKSYGANFSWNKRTRVSTK. Ser-173 is modified (phosphoserine).

This sequence belongs to the complex I NDUFS4 subunit family. As to quaternary structure, mammalian complex I is composed of 45 different subunits. This is a component of the iron-sulfur (IP) fragment of the enzyme. Interacts with BCAP31 and TOMM40; the interaction mediates its translocation to the mitochondria; the interaction with BCAP31 is direct. In terms of processing, phosphorylated.

It localises to the mitochondrion inner membrane. Accessory subunit of the mitochondrial membrane respiratory chain NADH dehydrogenase (Complex I), that is believed not to be involved in catalysis. Complex I functions in the transfer of electrons from NADH to the respiratory chain. The immediate electron acceptor for the enzyme is believed to be ubiquinone. In Bos taurus (Bovine), this protein is NADH dehydrogenase [ubiquinone] iron-sulfur protein 4, mitochondrial (NDUFS4).